A 424-amino-acid polypeptide reads, in one-letter code: MKTIRIIGAGLSGCEAAYYLLKKGYFVELYEIKTIKKNPIQHYDYFCELAYSDSFRSTDLNTSVGTLKKELELLDSLIIKAAKYASINQNNELVVNRIEFSKYITNYLKTFNNLKIIEQEYLNIDLNIPTIIAIGPISTPSFLTNLKKIINKKNLKLFDTVEPTILKQSINKNICYSLDNNLDYLYCDLNKEQFEKFYNALISAKTFNSPLKNEIKLLEKNNYFSIESLAKNKQEFINHFKPINNNAYITITLKKDSVIDNLYTIVNFQTSLMWNEQLKVFSLIPGLENLKIMRYGVMHKNNYINTKKLLNLGVQLKTNKNIFFAGQIIGVDGYVESVCSGLISAINLDRYLNNKKMILPNKNSTIGSLYNYLLKTDSNFNPMRINWALVDLIDGFELSDNSKKFYSKRAIELIKQYLKKINYK.

Residue 8–13 participates in FAD binding; sequence GAGLSG.

Belongs to the MnmG family. TrmFO subfamily. It depends on FAD as a cofactor.

It is found in the cytoplasm. It catalyses the reaction uridine(54) in tRNA + (6R)-5,10-methylene-5,6,7,8-tetrahydrofolate + NADH + H(+) = 5-methyluridine(54) in tRNA + (6S)-5,6,7,8-tetrahydrofolate + NAD(+). The enzyme catalyses uridine(54) in tRNA + (6R)-5,10-methylene-5,6,7,8-tetrahydrofolate + NADPH + H(+) = 5-methyluridine(54) in tRNA + (6S)-5,6,7,8-tetrahydrofolate + NADP(+). Its function is as follows. Catalyzes the folate-dependent formation of 5-methyl-uridine at position 54 (M-5-U54) in all tRNAs. The chain is Methylenetetrahydrofolate--tRNA-(uracil-5-)-methyltransferase TrmFO 1 from Mycoplasma mycoides subsp. mycoides SC (strain CCUG 32753 / NCTC 10114 / PG1).